A 122-amino-acid polypeptide reads, in one-letter code: Large ribosomal subunit protein uL14c (122 aa).

It belongs to the universal ribosomal protein uL14 family. In terms of assembly, part of the 50S ribosomal subunit.

The protein localises to the plastid. Its subcellular location is the chloroplast. In terms of biological role, binds to 23S rRNA. This is Large ribosomal subunit protein uL14c from Chlorella vulgaris (Green alga).